The sequence spans 296 residues: GTPase Era (296 aa).

Residues 3 to 170 (KSGFVTIVGR…KELMFKYIPE (168 aa)) enclose the Era-type G domain. Residues 11–18 (GRPNVGKS) are G1. Residue 11-18 (GRPNVGKS) coordinates GTP. A G2 region spans residues 37–41 (QTTRN). Residues 58–61 (DTPG) form a G3 region. Residues 58 to 62 (DTPGI) and 120 to 123 (NKID) contribute to the GTP site. The segment at 120 to 123 (NKID) is G4. Positions 149–151 (ISA) are G5. Residues 201 to 278 (LSEEVPHGIA…YIRLWVKVKE (78 aa)) form the KH type-2 domain.

The protein belongs to the TRAFAC class TrmE-Era-EngA-EngB-Septin-like GTPase superfamily. Era GTPase family. In terms of assembly, monomer.

The protein localises to the cytoplasm. Its subcellular location is the cell membrane. In terms of biological role, an essential GTPase that binds both GDP and GTP, with rapid nucleotide exchange. Plays a role in 16S rRNA processing and 30S ribosomal subunit biogenesis and possibly also in cell cycle regulation and energy metabolism. This is GTPase Era from Clostridium botulinum (strain ATCC 19397 / Type A).